We begin with the raw amino-acid sequence, 173 residues long: Disulfide bond formation protein B (173 aa).

Topologically, residues 1–11 are cytoplasmic; that stretch reads MNALQWSFRAQ. The helical transmembrane segment at 12-28 threads the bilayer; it reads CLTGFLFCTGLLAYAIF. Topologically, residues 29–46 are periplasmic; sequence LQLHQGLEPCPLCIFQRI. Cysteines 38 and 41 form a disulfide. The helical transmembrane segment at 47–63 threads the bilayer; that stretch reads AFAVLGILFLIAGLYNS. The Cytoplasmic segment spans residues 64 to 70; sequence SNVYTRK. Residues 71–88 traverse the membrane as a helical segment; the sequence is AYGLLIFLTAAIGTGIAG. Over 89-145 the chain is Periplasmic; the sequence is RHVWVQLMPHNTISSCGSPLSFLSETMGPFEVFRTVLTGTSDCGNIDWRFLGLSMPM. Cys104 and Cys131 are joined by a disulfide. Residues 146–164 traverse the membrane as a helical segment; it reads WSMFWFVALALLGLLVGFK. The Cytoplasmic segment spans residues 165-173; sequence AERRKPLFS.

It belongs to the DsbB family.

Its subcellular location is the cell inner membrane. In terms of biological role, required for disulfide bond formation in some periplasmic proteins. Acts by oxidizing the DsbA protein. The polypeptide is Disulfide bond formation protein B (Xylella fastidiosa (strain 9a5c)).